The chain runs to 388 residues: DNA ADP-ribosyl transferase-DNA ADP-ribosyl glycohydrolase fusion protein (388 aa).

The DarT domain occupies 6-197 (RELYYITHID…PVIPDPTFFF (192 aa)). NAD(+)-binding positions include 10-12 (YIT) and R50. Residues 34–52 (QSINCKKVYDNSIVLKRKS) are NAD(+)-binding element. The active-site Proton acceptor is R50. The segment at 107 to 152 (TDGNAASSETQIYRKSEIKNIKNIISVKDMEYWREEDGSKRKIMAE) is ADP-ribosylating turn-turn loop. E152 is an active-site residue. Residues 196 to 376 (FFLPNREIKL…IYLPLEKRIP (181 aa)) enclose the Macro domain. Residues 215–216 (DM), 227–229 (SVN), T301, 339–343 (GCGLG), and 371–372 (LE) each bind ADP-D-ribose.

In the N-terminal section; belongs to the DarT ADP-ribosyltransferase family. This sequence in the C-terminal section; belongs to the DarG ADP-ribosyl glycohydrolase family.

It carries out the reaction an N-(ADP-alpha-D-ribosyl)-thymidine in DNA + H2O = a thymidine in DNA + ADP-D-ribose. The enzyme catalyses a thymidine in DNA + NAD(+) = an N-(ADP-alpha-D-ribosyl)-thymidine in DNA + nicotinamide + H(+). Its function is as follows. A fusion protein of the toxic and antitoxin components of a hybrid type II/IV toxin-antitoxin (TA) system. The N-terminal domain ADP-ribosylates ssDNA on a thymidine residue, while the C-terminal domain removes the modification, neutralizing the toxic effect. This chain is DNA ADP-ribosyl transferase-DNA ADP-ribosyl glycohydrolase fusion protein, found in Thermosipho africanus (strain H17ap60334).